A 371-amino-acid chain; its full sequence is Zygote-specific protein 3 (371 aa).

The first 24 residues, 1–24 (MLRSAGRVAAVALLALFALGCVSA), serve as a signal peptide directing secretion. Asn41 is a glycosylation site (N-linked (GlcNAc...) asparagine). ANK repeat units lie at residues 62–91 (TRRLPLVEAARSRDARLVGALLDQGALARV) and 94–123 (GTTTPLHLSMQGGSAAIVKLLLAHGADPNA). WW domains lie at 159–187 (EPGAWIREERDGQSYYWKPANGESRWAVP) and 283–313 (YATPWRELVDEASGAPFFFNVETGDTTWELP).

The protein localises to the endoplasmic reticulum lumen. May have a role in the remodeling of the endoplasmic reticulum upon zygote formation. In Chlamydomonas reinhardtii (Chlamydomonas smithii), this protein is Zygote-specific protein 3 (ZYS3).